A 270-amino-acid chain; its full sequence is Phosphodiesterase YaeI (270 aa).

A divalent metal cation contacts are provided by D56, H58, D88, N120, H209, and H211.

Belongs to the metallophosphoesterase superfamily. The cofactor is a divalent metal cation.

Its function is as follows. Shows phosphodiesterase activity, hydrolyzing phosphodiester bond in the artificial chromogenic substrate bis-p-nitrophenyl phosphate (bis-pNPP). The sequence is that of Phosphodiesterase YaeI (yaeI) from Escherichia coli (strain K12).